Consider the following 41-residue polypeptide: U-megalopygitoxin(11)-Mo28 (41 aa).

Residues 1–29 form the signal peptide; that stretch reads MRTTLLLLIIAITVMVFVSEAYAAPAPEP.

The protein belongs to the caterpillar 11 family. In terms of tissue distribution, expressed by the venom apparatus.

The protein localises to the secreted. Functionally, probable toxin. The chain is U-megalopygitoxin(11)-Mo28 from Megalopyge opercularis (Southern flannel moth).